The following is a 294-amino-acid chain: uncharacterized protein (294 aa).

The disordered stretch occupies residues 181–204 (DEPFPTTKNHNNDKRETNDKDDQQ). Basic and acidic residues predominate over residues 190–204 (HNNDKRETNDKDDQQ).

The protein belongs to the IIV-6 391R family.

This is an uncharacterized protein from Acheta domesticus (House cricket).